The following is a 567-amino-acid chain: Urease subunit alpha (567 aa).

Residues 128–567 (GGVDTHVHYI…LPLAQRYHLF (440 aa)) enclose the Urease domain. The Ni(2+) site is built by histidine 133, histidine 135, and lysine 216. Residue lysine 216 is modified to N6-carboxylysine. Histidine 218 is a substrate binding site. Positions 245 and 271 each coordinate Ni(2+). Catalysis depends on histidine 319, which acts as the Proton donor. Aspartate 359 is a Ni(2+) binding site.

The protein belongs to the metallo-dependent hydrolases superfamily. Urease alpha subunit family. Heterotrimer of UreA (gamma), UreB (beta) and UreC (alpha) subunits. Three heterotrimers associate to form the active enzyme. Ni cation serves as cofactor. Post-translationally, carboxylation allows a single lysine to coordinate two nickel ions.

It is found in the cytoplasm. It carries out the reaction urea + 2 H2O + H(+) = hydrogencarbonate + 2 NH4(+). It participates in nitrogen metabolism; urea degradation; CO(2) and NH(3) from urea (urease route): step 1/1. This Pseudoalteromonas translucida (strain TAC 125) protein is Urease subunit alpha.